Consider the following 133-residue polypeptide: Large ribosomal subunit protein uL22 (133 aa).

This sequence belongs to the universal ribosomal protein uL22 family. Part of the 50S ribosomal subunit.

Functionally, this protein binds specifically to 23S rRNA; its binding is stimulated by other ribosomal proteins, e.g. L4, L17, and L20. It is important during the early stages of 50S assembly. It makes multiple contacts with different domains of the 23S rRNA in the assembled 50S subunit and ribosome. Its function is as follows. The globular domain of the protein is located near the polypeptide exit tunnel on the outside of the subunit, while an extended beta-hairpin is found that lines the wall of the exit tunnel in the center of the 70S ribosome. In Granulibacter bethesdensis (strain ATCC BAA-1260 / CGDNIH1), this protein is Large ribosomal subunit protein uL22.